Consider the following 391-residue polypeptide: Rhizopuspepsin-2 (391 aa).

Residues 1–21 (MKLTLISSCVALAFMALATEA) form the signal peptide. The propeptide at 22–68 (APSGKKLSIPLTKNTNYKPSAKNAIQKALAKYHRFRTTSSSNSTSTE) is activation peptide. In terms of domain architecture, Peptidase A1 spans 84-388 (YYGKVTVGTP…NQEVPEVQIA (305 aa)). The active site involves aspartate 102. Cysteines 115 and 118 form a disulfide. Aspartate 285 is a catalytic residue. Residues cysteine 319 and cysteine 352 are joined by a disulfide bond.

This sequence belongs to the peptidase A1 family.

The enzyme catalyses Hydrolysis of proteins with broad specificity similar to that of pepsin A, preferring hydrophobic residues at P1 and P1'. Clots milk and activates trypsinogen. Does not cleave 4-Gln-|-His-5, but does cleave 10-His-|-Leu-11 and 12-Val-|-Glu-13 in B chain of insulin.. This chain is Rhizopuspepsin-2, found in Rhizopus niveus.